The primary structure comprises 298 residues: GTPase Era (298 aa).

Positions 8 to 176 (HCGSVAVIGR…VRDVLALLPE (169 aa)) constitute an Era-type G domain. The tract at residues 16–23 (GRPNVGKS) is G1. 16–23 (GRPNVGKS) is a GTP binding site. The tract at residues 42–46 (QTTRH) is G2. The G3 stretch occupies residues 63 to 66 (DTPG). Residues 63–67 (DTPGL) and 125–128 (NKID) contribute to the GTP site. Residues 125–128 (NKID) form a G4 region. Residues 155 to 157 (ISA) are G5. The KH type-2 domain occupies 199-283 (VREQLMRQLG…FLETWVRVRE (85 aa)).

This sequence belongs to the TRAFAC class TrmE-Era-EngA-EngB-Septin-like GTPase superfamily. Era GTPase family. As to quaternary structure, monomer.

Its subcellular location is the cytoplasm. The protein resides in the cell inner membrane. An essential GTPase that binds both GDP and GTP, with rapid nucleotide exchange. Plays a role in 16S rRNA processing and 30S ribosomal subunit biogenesis and possibly also in cell cycle regulation and energy metabolism. The chain is GTPase Era from Stenotrophomonas maltophilia (strain R551-3).